The primary structure comprises 725 residues: uncharacterized protein (725 aa).

The 194-residue stretch at 363 to 556 (GTYVEIPLYS…FVTTRPEDSC (194 aa)) folds into the FtsK domain. 382–389 (GRTRGGKS) contacts ATP.

This sequence belongs to the FtsK/SpoIIIE/SftA family.

Functionally, probable DNA motor protein. May track DNA in a ATP-dependent manner by generating positive supercoils in front of it and negative supercoils behind it. This is an uncharacterized protein from Nostoc sp. (strain PCC 7120 / SAG 25.82 / UTEX 2576).